Consider the following 513-residue polypeptide: Protein PNS1 (513 aa).

Pro residues predominate over residues 1–13 (MSNNNYPPPPNPP). The segment at 1–41 (MSNNNYPPPPNPPNYQGEEQVHNVQPDLENNQEKYYAEQPQ) is disordered. The Cytoplasmic segment spans residues 1-60 (MSNNNYPPPPNPPNYQGEEQVHNVQPDLENNQEKYYAEQPQPSQQFEESFKIDKPKWNDW). A helical membrane pass occupies residues 61–81 (PFTVFFLLTVAGFIAIAGITL). Residues 82–108 (NALKKTYGLQGSSIYNSTDTFTLNTNT) lie on the Extracellular side of the membrane. Residue Asn97 is glycosylated (N-linked (GlcNAc...) asparagine). Residues 109-129 (IILFGFIIVVGVVLSVLIIVY) form a helical membrane-spanning segment. Over 130-136 (ARMAPRV) the chain is Cytoplasmic. Residues 137–157 (FITTGLILNIILGLGTCIYYF) traverse the membrane as a helical segment. Residues 158 to 163 (VAHYYS) are Extracellular-facing. A helical membrane pass occupies residues 164–182 (AAIVFLVFTLFTAWCYWSC). Residues 183–210 (RHRIPFSATVLEITIDVMKRYPSTLITS) are Cytoplasmic-facing. Residues 211-231 (FIGIIVSGLFSTLFSVVIVAT) traverse the membrane as a helical segment. Over 232 to 251 (YVKYDPDSQGCDVAGGGCSQ) the chain is Extracellular. The helical transmembrane segment at 252 to 272 (SKLIGVLVFVFFAGYYISEVI) threads the bilayer. The Cytoplasmic segment spans residues 273–309 (KNVIHITIAGIYGTWYYLSNSDQGEPKHPALGAFKRA). A helical transmembrane segment spans residues 310–330 (MTYCFGSVCFGSLIVSIIQLI). Topologically, residues 331 to 346 (RSFVQILKQNAFGSGD) are extracellular. A helical membrane pass occupies residues 347 to 367 (NCAGCGFLILDFVLGFIDWIV). The Cytoplasmic segment spans residues 368–412 (RYFNHYAYCYVALYGKSYLKSARDTFDLIRFKGMDALINDCFINT). Residues 413 to 433 (SLNLYSMFVGYVVALLAYFYL) form a helical membrane-spanning segment. The Extracellular portion of the chain corresponds to 434 to 460 (KFTDPAYNSSGTFYAPVVAFSFLISGQ). N-linked (GlcNAc...) asparagine glycosylation is present at Asn441. A helical membrane pass occupies residues 461-481 (ITRIALTVISSGISTFFVALA). Topologically, residues 482–513 (KDPEVFQMTNRDRFDEIFRNYPQVLQKITSDH) are cytoplasmic.

It belongs to the CTL (choline transporter-like) family.

It localises to the cell membrane. Probably involved in transport through the plasma membrane. In Debaryomyces hansenii (strain ATCC 36239 / CBS 767 / BCRC 21394 / JCM 1990 / NBRC 0083 / IGC 2968) (Yeast), this protein is Protein PNS1 (PNS1).